The following is a 229-amino-acid chain: Protein-L-isoaspartate O-methyltransferase (229 aa).

Ser74 is a catalytic residue.

Belongs to the methyltransferase superfamily. L-isoaspartyl/D-aspartyl protein methyltransferase family.

It is found in the cytoplasm. It carries out the reaction [protein]-L-isoaspartate + S-adenosyl-L-methionine = [protein]-L-isoaspartate alpha-methyl ester + S-adenosyl-L-homocysteine. Functionally, catalyzes the methyl esterification of L-isoaspartyl residues in peptides and proteins that result from spontaneous decomposition of normal L-aspartyl and L-asparaginyl residues. It plays a role in the repair and/or degradation of damaged proteins. The protein is Protein-L-isoaspartate O-methyltransferase of Pelotomaculum thermopropionicum (strain DSM 13744 / JCM 10971 / SI).